The primary structure comprises 274 residues: (R)-stereoselective amidase (274 aa).

Residues 1–234 (MKIELVQLAG…EVRHVVELDL (234 aa)) enclose the CN hydrolase domain. The Proton acceptor role is filled by glutamate 40. The active-site Proton donor is lysine 108. The active-site Nucleophile is the cysteine 140.

Monomer.

The catalysed reaction is (R)-piperazine-2-carboxamide + H2O = (R)-piperazine-2-carboxylate + NH4(+). The enzyme catalyses beta-alaninamide + H2O = beta-alanine + NH4(+). Completely inhibited by p-chloromercuribenzoate, N-ethylmaleimide, MnSO(4), MnCl(2), CoCl(2), NiCl(2), CuSO(4), CuCl(2), ZnSO(4), ZnCl(2), AgNO(3), CdCl(2), HgCl(2) and PbCl(2). Partially inhibited by FeCl(3) and Fe(NH(4))(2)(SO(4))(2). Slightly enhanced by dithiothreitol. Unaffected by LiBr, H(2)BO(3), NaCl, MgSO(4), MgCl(2), AlCl(3), KCl, CaCl(2), CrCl(3), RbCl, Na(2)MoO(4), (NH(4))(6)Mo(7)O(24), CsCl and BaCl(2). Unaffected by the chelating agents o-phenanthroline, 8-hydroxyquinoline, enthylenediaminetetraacetic acid and alpha,alpha'-dipyridyl. Not inhibited by the carbonyl reagents hydroxylamine, phenylhydrazine, hydrazine, D,L-penicillamine and D-cycloserine. Not affected by the serine protease inhibitor phenylmethanesulfonyl fluoride, the serine/cysteine protease inhibitor leupeptine or the aspartic protease inhibitor pepstatin. In terms of biological role, hydrolyzes (R)-piperazine-2-carboxamide and (R)-piperazine-2-tert-butylcarboxamide with strict R-stereoselectivity. Also active towards beta-alaninamide, piperidine-3-carboxmide, D-glutaminamide and slightly active towards L-glutaminamide and piperidine-4-carboxamide. The chain is (R)-stereoselective amidase from Pseudomonas sp.